Reading from the N-terminus, the 146-residue chain is Dual specificity phosphatase Cdc25 (146 aa).

In terms of domain architecture, Rhodanese spans 34-135 (RRPNIAIIDV…WEASGKPVCR (102 aa)). 45-48 (DEER) lines the substrate pocket. His-53 contacts Zn(2+). 68–71 (KISH) provides a ligand contact to substrate. Cys-86 serves as the catalytic Cysteine persulfide intermediate. 90 to 92 (QVR) is a binding site for substrate. 3 residues coordinate Zn(2+): Cys-134, Cys-136, and Cys-141.

The protein belongs to the MPI phosphatase family. Expressed in roots and at lower levels in shoots (at protein level). Expressed in leaves, stems and flowers.

It localises to the nucleus. The catalysed reaction is O-phospho-L-tyrosyl-[protein] + H2O = L-tyrosyl-[protein] + phosphate. It carries out the reaction [glutaredoxin]-dithiol + arsenate + glutathione + H(+) = glutathionyl-S-S-[glutaredoxin] + arsenite + H2O. Its activity is regulated as follows. Inhibited by NSC95397. In terms of biological role, tyrosine protein phosphatase that dephosphorylates CDK complex and activate its kinase activity in vitro. Its function is as follows. Arsenate reductase that plays a major role in the reduction of arsenate to arsenite and arsenic retention in roots. Has an in vitro and in vivo arsenate reductase activity. Plays no role in arsenic metabolism. This is Dual specificity phosphatase Cdc25 from Arabidopsis thaliana (Mouse-ear cress).